The sequence spans 262 residues: 5'-nucleotidase SurE (262 aa).

The a divalent metal cation site is built by Asp-8, Asp-9, Ser-40, and Asn-92.

Belongs to the SurE nucleotidase family. A divalent metal cation serves as cofactor.

It localises to the cytoplasm. The catalysed reaction is a ribonucleoside 5'-phosphate + H2O = a ribonucleoside + phosphate. Functionally, nucleotidase that shows phosphatase activity on nucleoside 5'-monophosphates. The protein is 5'-nucleotidase SurE of Xylella fastidiosa (strain M23).